We begin with the raw amino-acid sequence, 291 residues long: Small ribosomal subunit protein uS2 (291 aa).

A disordered region spans residues 231–291; it reads NRGSGTTEAP…AAEAPAEDAK (61 aa). Basic and acidic residues predominate over residues 246–259; sequence EWERELLEGSKAEE. Positions 260–285 are enriched in low complexity; the sequence is AAAAAPAENAEAPAAPAAEAPAAAEA.

It belongs to the universal ribosomal protein uS2 family.

In Pseudarthrobacter chlorophenolicus (strain ATCC 700700 / DSM 12829 / CIP 107037 / JCM 12360 / KCTC 9906 / NCIMB 13794 / A6) (Arthrobacter chlorophenolicus), this protein is Small ribosomal subunit protein uS2.